The sequence spans 588 residues: Phomenoic acid biosynthesis cluster cytochrome P450 monooxygenase (588 aa).

An N-terminal signal peptide occupies residues 1–21; sequence MSFARIFITILLLFILRRAFK. Asn-293 carries N-linked (GlcNAc...) asparagine glycosylation. Residues 467-486 are compositionally biased toward basic and acidic residues; that stretch reads HQSDPDRFKPSPDAPDEKLF. Positions 467-490 are disordered; the sequence is HQSDPDRFKPSPDAPDEKLFRPSR. Position 519 (Cys-519) interacts with heme.

The protein belongs to the cytochrome P450 family. Heme serves as cofactor.

It participates in secondary metabolite biosynthesis. In terms of biological role, cytochrome P450 monooxygenase; part of the gene cluster that mediates the biosynthesis of phomenoic acid, a long chain aliphatic carboxylic acid that does not appear to be essential for pathogenicity but may play a role in allowing to outcompete other fungi in the environmental niche via its antifungal properties. The polyketide synthase produces the long methylated aliphatic carboxylic acid chain of phomenoic acid. The cluster-specific cytochrome P450 monooxygenase may then hydroxylate the methyl group of carbon 31. The putative dehydrogenase YogA, which has no obvious role in phomenoic acid biosynthesis, may further modify phomenoic acid to produce a compound not identified yet. The polypeptide is Phomenoic acid biosynthesis cluster cytochrome P450 monooxygenase (Leptosphaeria maculans (strain JN3 / isolate v23.1.3 / race Av1-4-5-6-7-8) (Blackleg fungus)).